A 340-amino-acid polypeptide reads, in one-letter code: Solute-binding protein Dde_0634 (340 aa).

A signal peptide spans 1–29; it reads MKSTFAALLIMVGCLVSGALLTGSEAAAA. Residues Tyr-99, Arg-172, 210-213, and Tyr-235 each bind (indol-3-yl)acetate; that span reads TSLD.

It belongs to the bacterial solute-binding protein 7 family. The complex is comprised of an extracytoplasmic solute-binding protein and a heteromeric permease formed by two transmembrane proteins.

It is found in the periplasm. Its function is as follows. Solute-binding protein that binds indole-3-pyruvate and indole-3-acetate (in vitro). Can also bind D-tryptophan (in vitro), but that is probably not a physiological ligand. Probably part of a tripartite ATP-independent periplasmic (TRAP) transport system that mediates solute transport into the cytoplasm. This chain is Solute-binding protein Dde_0634, found in Oleidesulfovibrio alaskensis (strain ATCC BAA-1058 / DSM 17464 / G20) (Desulfovibrio alaskensis).